The primary structure comprises 512 residues: ATP synthase subunit alpha (512 aa).

Residue 169–176 participates in ATP binding; that stretch reads GDRQTGKT.

Belongs to the ATPase alpha/beta chains family. In terms of assembly, F-type ATPases have 2 components, CF(1) - the catalytic core - and CF(0) - the membrane proton channel. CF(1) has five subunits: alpha(3), beta(3), gamma(1), delta(1), epsilon(1). CF(0) has three main subunits: a(1), b(2) and c(9-12). The alpha and beta chains form an alternating ring which encloses part of the gamma chain. CF(1) is attached to CF(0) by a central stalk formed by the gamma and epsilon chains, while a peripheral stalk is formed by the delta and b chains.

It localises to the cell inner membrane. It catalyses the reaction ATP + H2O + 4 H(+)(in) = ADP + phosphate + 5 H(+)(out). Functionally, produces ATP from ADP in the presence of a proton gradient across the membrane. The alpha chain is a regulatory subunit. This chain is ATP synthase subunit alpha, found in Azoarcus sp. (strain BH72).